A 318-amino-acid polypeptide reads, in one-letter code: Ribokinase (318 aa).

Residues 11–13 (NTD), 41–45 (GKGAN), and E146 contribute to the substrate site. Residues N190 and 229–234 (TLGSQG) contribute to the ATP site. Residues D256 and T258 each contribute to the K(+) site. 261 to 262 (GD) is a binding site for ATP. D262 is a substrate binding site. The active-site Proton acceptor is the D262. Residues T292, R295, G297, and S301 each contribute to the K(+) site.

Belongs to the carbohydrate kinase PfkB family. Ribokinase subfamily. In terms of assembly, homodimer. Requires Mg(2+) as cofactor.

The protein resides in the cytoplasm. It is found in the nucleus. The enzyme catalyses D-ribose + ATP = D-ribose 5-phosphate + ADP + H(+). Its pathway is carbohydrate metabolism; D-ribose degradation; D-ribose 5-phosphate from beta-D-ribopyranose: step 2/2. Activated by a monovalent cation that binds near, but not in, the active site. The most likely occupant of the site in vivo is potassium. Ion binding induces a conformational change that may alter substrate affinity. In terms of biological role, catalyzes the phosphorylation of ribose at O-5 in a reaction requiring ATP and magnesium. The resulting D-ribose-5-phosphate can then be used either for sythesis of nucleotides, histidine, and tryptophan, or as a component of the pentose phosphate pathway. The chain is Ribokinase from Schizosaccharomyces pombe (strain 972 / ATCC 24843) (Fission yeast).